A 401-amino-acid polypeptide reads, in one-letter code: Bifunctional enzyme IspD/IspF (401 aa).

Residues 1 to 234 (MQKPPRTAAI…SRLTAALGDI (234 aa)) form a 2-C-methyl-D-erythritol 4-phosphate cytidylyltransferase region. The segment at 235–401 (RTGTGYDVHA…SPWGAEGQAS (167 aa)) is 2-C-methyl-D-erythritol 2,4-cyclodiphosphate synthase. A divalent metal cation-binding residues include aspartate 241 and histidine 243. 4-CDP-2-C-methyl-D-erythritol 2-phosphate is bound by residues 241–243 (DVH) and 267–268 (HS). Histidine 275 provides a ligand contact to a divalent metal cation. 4-CDP-2-C-methyl-D-erythritol 2-phosphate-binding positions include 289–291 (DIG), 365–368 (TTSE), phenylalanine 372, and arginine 375.

In the N-terminal section; belongs to the IspD/TarI cytidylyltransferase family. IspD subfamily. The protein in the C-terminal section; belongs to the IspF family. Requires a divalent metal cation as cofactor.

It carries out the reaction 2-C-methyl-D-erythritol 4-phosphate + CTP + H(+) = 4-CDP-2-C-methyl-D-erythritol + diphosphate. The catalysed reaction is 4-CDP-2-C-methyl-D-erythritol 2-phosphate = 2-C-methyl-D-erythritol 2,4-cyclic diphosphate + CMP. The protein operates within isoprenoid biosynthesis; isopentenyl diphosphate biosynthesis via DXP pathway; isopentenyl diphosphate from 1-deoxy-D-xylulose 5-phosphate: step 2/6. Its pathway is isoprenoid biosynthesis; isopentenyl diphosphate biosynthesis via DXP pathway; isopentenyl diphosphate from 1-deoxy-D-xylulose 5-phosphate: step 4/6. Bifunctional enzyme that catalyzes the formation of 4-diphosphocytidyl-2-C-methyl-D-erythritol from CTP and 2-C-methyl-D-erythritol 4-phosphate (MEP) (IspD), and catalyzes the conversion of 4-diphosphocytidyl-2-C-methyl-D-erythritol 2-phosphate (CDP-ME2P) to 2-C-methyl-D-erythritol 2,4-cyclodiphosphate (ME-CPP) with a corresponding release of cytidine 5-monophosphate (CMP) (IspF). This chain is Bifunctional enzyme IspD/IspF, found in Rhodopseudomonas palustris (strain HaA2).